The sequence spans 341 residues: 4-(gamma-L-glutamylamino)butanoyl-[BtrI acyl-carrier protein] monooxygenase BtrO (341 aa).

The protein belongs to the bacterial luciferase oxidoreductase family.

It catalyses the reaction 4-(gamma-L-glutamylamino)butanoyl-[BtrI ACP] + FMNH2 + O2 = 4-(gamma-L-glutamylamino)-(2S)-2-hydroxybutanoyl-[BtrI ACP] + FMN + H2O + H(+). It functions in the pathway antibiotic biosynthesis; butirosin biosynthesis. In terms of biological role, monooxygenase component of a two-component system involved in the biosynthesis of the side chain of the aminoglycoside antibiotics in the biosynthetic pathway of butirosin. Together with BtrV, mediates hydroxylation of gamma-L-Glu-GABA-S-BtrI. Not able to hydroxylate free substrates, activation by the acyl-carrier protein is mandatory. Octanoyl-S-[BtrI acyl-carrier protein] is also accepted as substrate. The chain is 4-(gamma-L-glutamylamino)butanoyl-[BtrI acyl-carrier protein] monooxygenase BtrO (btrO) from Niallia circulans (Bacillus circulans).